The primary structure comprises 265 residues: Orotidine 5'-phosphate decarboxylase (265 aa).

Residues Asp38, 60 to 62 (KTH), 91 to 100 (DRKFADIGNT), Tyr213, and Arg232 each bind substrate. The active-site Proton donor is Lys93.

This sequence belongs to the OMP decarboxylase family.

It carries out the reaction orotidine 5'-phosphate + H(+) = UMP + CO2. The protein operates within pyrimidine metabolism; UMP biosynthesis via de novo pathway; UMP from orotate: step 2/2. The protein is Orotidine 5'-phosphate decarboxylase (pyrG) of Mucor circinelloides f. lusitanicus (Mucor racemosus var. lusitanicus).